The chain runs to 1607 residues: Laminin subunit gamma-1 (1607 aa).

The signal sequence occupies residues 1 to 33; sequence MTGGGRAALALQPRGRLWPLLAVLAAVAGCVRA. One can recognise a Laminin N-terminal domain in the interval 44–283; sequence RPQRCMPEFV…AISDFAVGGR (240 aa). 2 N-linked (GlcNAc...) asparagine glycosylation sites follow: N58 and N132. 15 disulfides stabilise this stretch: C284–C293, C286–C303, C305–C314, C340–C349, C342–C365, C368–C377, C380–C393, C396–C408, C398–C414, C416–C425, C428–C440, C443–C454, C445–C461, C463–C472, and C475–C490. 4 consecutive Laminin EGF-like domains span residues 284–339, 340–395, 396–442, and 443–492; these read CKCN…ESLP, CDCN…ACSP, CHCS…GCRP, and CSCD…GCTP. Positions 493–502 constitute a Laminin EGF-like 5; first part domain; that stretch reads CFCFGHSSVC. A Laminin IV type A domain is found at 512–687; it reads DISSTFQIDE…PGVPATWVES (176 aa). Residues N574 and N648 are each glycosylated (N-linked (GlcNAc...) asparagine). The Laminin EGF-like 5; second part domain maps to 688–721; it reads CTCPVGYGGQFCETCLPGYRRETPSLGPYSPCVL. Disulfide bonds link C722-C731, C724-C738, C740-C749, C752-C768, C771-C779, C773-C790, C793-C802, C805-C823, C826-C840, C828-C847, C850-C859, C862-C879, C882-C896, C884-C903, C905-C914, C917-C930, C933-C945, C935-C952, C954-C963, C966-C978, C981-C993, C983-C999, C1001-C1010, and C1013-C1026. Laminin EGF-like domains are found at residues 722-770 and 771-825; these read CTCN…DCQP and CPCP…LCRP. The region spanning 826-881 is the Laminin EGF-like 8; nidogen-binding domain; the sequence is CQCNDNIDPNAVGNCNRLTGECLKCIYNTAGFYCDRCKEGFFGNPLAPNPADKCKA. Laminin EGF-like domains lie at 882-932, 933-980, and 981-1028; these read CACN…GCER, CDCH…GCKP, and CDCH…GCQE. 2 N-linked (GlcNAc...) asparagine glycosylation sites follow: N1020 and N1105. The interval 1029 to 1607 is domain II and I; it reads CPACYRLVKD…CFNTPSIEKP (579 aa). A coiled-coil region spans residues 1034–1594; that stretch reads RLVKDKAAEH…HNLEDIKKTL (561 aa). At S1147 the chain carries Phosphoserine. 8 N-linked (GlcNAc...) asparagine glycosylation sites follow: N1159, N1173, N1203, N1221, N1239, N1378, N1393, and N1437. S1491 carries the phosphoserine modification.

As to quaternary structure, laminin is a complex glycoprotein, consisting of three different polypeptide chains (alpha, beta, gamma), which are bound to each other by disulfide bonds into a cross-shaped molecule comprising one long and three short arms with globules at each end. Gamma-1 is a subunit of laminin-1 (laminin-111 or EHS laminin), laminin-2 (laminin-211 or merosin), laminin-3 (laminin-121 or S-laminin), laminin-4 (laminin-221 or S-merosin), laminin-6 (laminin-311 or K-laminin), laminin-7 (laminin-321 or KS-laminin), laminin-8 (laminin-411), laminin-9 (laminin-421), laminin-10 (laminin-511) and laminin-11 (laminin-521). Interacts with SVEP1. In terms of tissue distribution, found in the basement membranes (major component).

It is found in the secreted. The protein resides in the extracellular space. It localises to the extracellular matrix. The protein localises to the basement membrane. Binding to cells via a high affinity receptor, laminin is thought to mediate the attachment, migration and organization of cells into tissues during embryonic development by interacting with other extracellular matrix components. The sequence is that of Laminin subunit gamma-1 (Lamc1) from Mus musculus (Mouse).